A 122-amino-acid chain; its full sequence is NADH-quinone oxidoreductase subunit A (122 aa).

3 helical membrane-spanning segments follow: residues 10 to 30 (MIVLIFLLLGILLPVVALTLG), 66 to 86 (IFALLFVIFDVETLFLYPWAV), and 91 to 111 (LGLFALIEMLIFVVMLLVGLA).

The protein belongs to the complex I subunit 3 family. As to quaternary structure, NDH-1 is composed of 14 different subunits. Subunits NuoA, H, J, K, L, M, N constitute the membrane sector of the complex.

The protein localises to the cell membrane. It carries out the reaction a quinone + NADH + 5 H(+)(in) = a quinol + NAD(+) + 4 H(+)(out). Its function is as follows. NDH-1 shuttles electrons from NADH, via FMN and iron-sulfur (Fe-S) centers, to quinones in the respiratory chain. The immediate electron acceptor for the enzyme in this species is believed to be a menaquinone. Couples the redox reaction to proton translocation (for every two electrons transferred, four hydrogen ions are translocated across the cytoplasmic membrane), and thus conserves the redox energy in a proton gradient. The protein is NADH-quinone oxidoreductase subunit A of Bacillus thuringiensis subsp. konkukian (strain 97-27).